Here is a 443-residue protein sequence, read N- to C-terminus: Tubulin beta chain (443 aa).

8 residues coordinate GTP: Q11, E69, S138, G142, T143, G144, N204, and N226. Residue E69 coordinates Mg(2+). Positions 421–443 are disordered; it reads EYQQYQDASAEEEGEFGEEEEEN. The span at 429 to 443 shows a compositional bias: acidic residues; the sequence is SAEEEGEFGEEEEEN.

Belongs to the tubulin family. As to quaternary structure, dimer of alpha and beta chains. A typical microtubule is a hollow water-filled tube with an outer diameter of 25 nm and an inner diameter of 15 nM. Alpha-beta heterodimers associate head-to-tail to form protofilaments running lengthwise along the microtubule wall with the beta-tubulin subunit facing the microtubule plus end conferring a structural polarity. Microtubules usually have 13 protofilaments but different protofilament numbers can be found in some organisms and specialized cells. The cofactor is Mg(2+).

It localises to the cytoplasm. Its subcellular location is the cytoskeleton. Its function is as follows. Tubulin is the major constituent of microtubules, a cylinder consisting of laterally associated linear protofilaments composed of alpha- and beta-tubulin heterodimers. Microtubules grow by the addition of GTP-tubulin dimers to the microtubule end, where a stabilizing cap forms. Below the cap, tubulin dimers are in GDP-bound state, owing to GTPase activity of alpha-tubulin. This chain is Tubulin beta chain (TUBB1), found in Polytomella agilis (Quadriflagellate alga).